The chain runs to 103 residues: Nucleoid-associated protein Cgl0243/cg0297 (103 aa).

It belongs to the YbaB/EbfC family. In terms of assembly, homodimer.

It is found in the cytoplasm. The protein resides in the nucleoid. Its function is as follows. Binds to DNA and alters its conformation. May be involved in regulation of gene expression, nucleoid organization and DNA protection. In Corynebacterium glutamicum (strain ATCC 13032 / DSM 20300 / JCM 1318 / BCRC 11384 / CCUG 27702 / LMG 3730 / NBRC 12168 / NCIMB 10025 / NRRL B-2784 / 534), this protein is Nucleoid-associated protein Cgl0243/cg0297.